The chain runs to 366 residues: tRNA/tmRNA (uracil-C(5))-methyltransferase (366 aa).

Residues Gln-190, Tyr-218, Asn-223, Glu-239, and Asp-299 each coordinate S-adenosyl-L-methionine. Residue Cys-324 is the Nucleophile of the active site. The active-site Proton acceptor is the Glu-358.

This sequence belongs to the class I-like SAM-binding methyltransferase superfamily. RNA M5U methyltransferase family. TrmA subfamily.

The catalysed reaction is uridine(54) in tRNA + S-adenosyl-L-methionine = 5-methyluridine(54) in tRNA + S-adenosyl-L-homocysteine + H(+). The enzyme catalyses uridine(341) in tmRNA + S-adenosyl-L-methionine = 5-methyluridine(341) in tmRNA + S-adenosyl-L-homocysteine + H(+). In terms of biological role, dual-specificity methyltransferase that catalyzes the formation of 5-methyluridine at position 54 (m5U54) in all tRNAs, and that of position 341 (m5U341) in tmRNA (transfer-mRNA). The polypeptide is tRNA/tmRNA (uracil-C(5))-methyltransferase (Escherichia coli O7:K1 (strain IAI39 / ExPEC)).